Here is a 340-residue protein sequence, read N- to C-terminus: Cyclic GMP-AMP synthase-like receptor 3 (340 aa).

ATP-binding positions include serine 62 and 74–76; that span reads EAD. The Mg(2+) site is built by glutamate 74, aspartate 76, and aspartate 177. ATP is bound by residues lysine 241 and 255–259; that span reads SYHLK. Mn(2+) contacts are provided by aspartate 267 and aspartate 270.

The protein belongs to the mab-21 family. Mg(2+) serves as cofactor. Mn(2+) is required as a cofactor.

The catalysed reaction is 2 ATP = 3',3'-c-di-AMP + 2 diphosphate. Nucleotidyltransferase that catalyzes the formation of cyclic di-AMP (3',3'-c-di-AMP) from 2 molecules of ATP and plays a key role in innate immunity. Acts as a key sensor of double-stranded RNA (dsRNA), the presence of dsRNA in the cytoplasm being a danger signal that triggers the immune responses. Directly binds dsRNA, activating the nucleotidyltransferase activity, leading to synthesis of 3',3'-c-di-AMP, a second messenger that binds to and activates Sting, thereby triggering the immune response via activation of the NF-kappa-B transcription factor. The protein is Cyclic GMP-AMP synthase-like receptor 3 of Stylophora pistillata (Smooth cauliflower coral).